A 73-amino-acid polypeptide reads, in one-letter code: uncharacterized protein (73 aa).

This is an uncharacterized protein from Dictyostelium discoideum (Social amoeba).